The following is a 554-amino-acid chain: MSPVLAGVLQLVALIAALALAYRPLGDYMAKVYSSDKHLRVEKWIYKGIGADPDTQMRWPAYLRGVLAFSAVSVLFLYVLQRVQGSLPGSLGFRSIDPDQAFNTAASFVTNTNWQSYYGEQAMGHVVQTGGLAVQNFVSASVGIAVAVALVRGFSRSRTGELGNFWSDLVRGTVRVLLPVSVIAAIVLVACGAIQNFSGIHSVGQFMGGSQQWNGGAVASQEAIKEAGTNGGGYFNANSAHPFENPGPFSNLFEIFLILLIPFALTRTFGRMVGSLRQGYAILATMVTIWIGFTALMMWTEFAHHGPAFQIAGGAMEGKETRFGVGGSSIFAVATTLTSTGAVDSFHSSFTGLGGGITLLSMQLGEIAPGGTGSGLYGILIMAVIAVFIAGLMVGRTPEYLGKKIGTREIKFAACYILITPALALVFTAAAMALPTPGHSMTNSGAHGFSEILYAYTSGANNNGSAFAGLNADTQWFNTTIGIVMLLGRFVPMVFVLALAGSLAEQKPIPATVGTLRTEKPLFTGLLVGAILIITGLTYFPALALGPLAEGLAS.

A run of 10 helical transmembrane segments spans residues methionine 1 to alanine 21, proline 60 to leucine 80, glycine 131 to valine 151, valine 174 to isoleucine 194, proline 246 to threonine 266, glycine 279 to tryptophan 299, glycine 375 to glycine 395, phenylalanine 412 to methionine 432, isoleucine 481 to glycine 501, and glycine 525 to leucine 545.

The protein belongs to the KdpA family. In terms of assembly, the system is composed of three essential subunits: KdpA, KdpB and KdpC.

The protein localises to the cell membrane. In terms of biological role, part of the high-affinity ATP-driven potassium transport (or Kdp) system, which catalyzes the hydrolysis of ATP coupled with the electrogenic transport of potassium into the cytoplasm. This subunit binds the extracellular potassium ions and delivers the ions to the membrane domain of KdpB through an intramembrane tunnel. The chain is Potassium-transporting ATPase potassium-binding subunit from Streptomyces avermitilis (strain ATCC 31267 / DSM 46492 / JCM 5070 / NBRC 14893 / NCIMB 12804 / NRRL 8165 / MA-4680).